The following is a 66-amino-acid chain: MAKGKDVRVTIILECTSCVRNDSKKELAGISRYITQKNRHNTPSRLELRKFCPYCYKHTIHGEIKK.

It belongs to the bacterial ribosomal protein bL33 family.

Its subcellular location is the plastid. The protein resides in the chloroplast. This is Large ribosomal subunit protein bL33c from Lobularia maritima (Sweet alyssum).